A 465-amino-acid polypeptide reads, in one-letter code: Argininosuccinate lyase (465 aa).

The protein belongs to the lyase 1 family. Argininosuccinate lyase subfamily.

It is found in the cytoplasm. It catalyses the reaction 2-(N(omega)-L-arginino)succinate = fumarate + L-arginine. The protein operates within amino-acid biosynthesis; L-arginine biosynthesis; L-arginine from L-ornithine and carbamoyl phosphate: step 3/3. The polypeptide is Argininosuccinate lyase (Rhodopseudomonas palustris (strain HaA2)).